We begin with the raw amino-acid sequence, 461 residues long: MEDLDALLSDLETTTSHMSRLGAPKERPPETLTPPPPYGHQPQTGSGESSGASGDKDHLYSTVCKPRSPKSVAPVAPPFSSSSGVLGNGLCELDRLLQELNATQFNITDEIMSQFPSSKMAEGEGKEDQSEDKSITTVPSSTFPAPSKPSATSATQELDRLMASLSDFRVQNHLPASGPPQPPAVSPTREGCPSPPGQTNKGSLDTMLGLLQSDLSRRGVPTQAKGLCGSCNKPIAGQVVTALGRAWHPEHFLCRGCSTTLGGSSFFEKDGAPFCPECYFERFSPRCGFCNQPIRHKMVTALGTHWHPEHFCCVSCGEPFGEEGFHEREGRPYCRRDFLQLFAPRCQGCQGPILDNYISALSALWHPDCFVCRECLAPFSGGSFFEHEGRPLCENHFHAQRGSLCATCGLPVTGRCVSALGRRFHPDHFTCTFCLRPLTKGSFQERASKPYCQPCFLKLFG.

Residue methionine 1 is modified to N-acetylmethionine. Residues 1–86 (MEDLDALLSD…PPFSSSSGVL (86 aa)) form a disordered region. A transcription activation region spans residues 1-200 (MEDLDALLSD…GCPSPPGQTN (200 aa)). Positions 1 to 240 (MEDLDALLSD…CNKPIAGQVV (240 aa)) are interaction with PTK2B/PYK2. The LD motif 1 signature appears at 3–15 (DLDALLSDLETTT). Threonine 33 bears the Phosphothreonine mark. At tyrosine 38 the chain carries Phosphotyrosine. The segment covering 41–52 (QPQTGSGESSGA) has biased composition (polar residues). Position 60 is a phosphotyrosine; by FAK2 and FYN (tyrosine 60). A Phosphoserine modification is found at serine 68. The segment covering 69–83 (PKSVAPVAPPFSSSS) has biased composition (low complexity). Residues 83–136 (SGVLGNGLCELDRLLQELNATQFNITDEIMSQFPSSKMAEGEGKEDQSEDKSIT) form an interaction with PTK2/FAK1 region. An LD motif 2 motif is present at residues 92–104 (ELDRLLQELNATQ). The disordered stretch occupies residues 116–154 (PSSKMAEGEGKEDQSEDKSITTVPSSTFPAPSKPSATSA). Basic and acidic residues predominate over residues 121–134 (AEGEGKEDQSEDKS). The segment covering 135 to 154 (ITTVPSSTFPAPSKPSATSA) has biased composition (polar residues). Serine 140, serine 141, serine 164, and serine 186 each carry phosphoserine. The short motif at 157 to 168 (ELDRLMASLSDF) is the LD motif 3 element. Positions 171–204 (QNHLPASGPPQPPAVSPTREGCPSPPGQTNKGSL) are disordered. Threonine 188 bears the Phosphothreonine mark. The residue at position 194 (serine 194) is a Phosphoserine. The LD motif 4 motif lies at 203 to 215 (SLDTMLGLLQSDL). LIM zinc-binding domains follow at residues 226–285 (GLCG…RFSP), 286–343 (RCGF…QLFA), 344–403 (PRCQ…QRGS), and 404–461 (LCAT…KLFG). The residue at position 403 (serine 403) is a Phosphoserine. Residue threonine 407 is modified to Phosphothreonine.

It belongs to the paxillin family. In terms of assembly, homooligomer. Interacts with PPARG. Interacts with TRAF4. Interacts with CRIP2. Interacts with HSPB1. Interacts with ILK. Interacts with LIMS1 and LIMS2. Interacts with NCK2. Interacts with NUDT16L1. Interacts with PAK. Interacts with PTPN12. Interacts with TCF3. Interacts with TCF7L2. Interacts with VCL. Interacts (via LD motif 3) with GIT1. Also interacts with GIT2. Forms a complex with ARHGEF7. Interacts with AR/androgen receptor in a ligand-dependent manner. Interacts with CSK. Interacts with PTK2/FAK1 and PTK2B/PYK2. Interacts with SLC6A3 and SLC6A4. Interacts with NR3C1. Interacts with SMAD3. Interacts with MAPK15. Interacts with SRC. Interacts with LYN. Interacts with talin. Interacts (via LIM zinc-binding domain 2) with CBLC (via RING-type zinc finger); the interaction is direct and enhances CBLC E3 ubiquitin-protein ligase activity. Interacts with PARVA. Interacts with PXN. Post-translationally, phosphorylated by gonadotropin-releasing hormone-activated SRC. In terms of tissue distribution, strongly expressed in large intestine, lung, spleen, testis, uterus and to a lower extent in brain, kidney and liver (at protein level). In brain, expressed by neuronal and non neuronal cells (at protein level).

The protein resides in the cell junction. It localises to the focal adhesion. Its subcellular location is the nucleus matrix. It is found in the cytoplasm. The protein localises to the cytoskeleton. In terms of biological role, functions as a molecular adapter coordinating multiple protein-protein interactions at the focal adhesion complex and in the nucleus. Links various intracellular signaling modules to plasma membrane receptors and regulates the Wnt and TGFB signaling pathways. May also regulate SLC6A3 and SLC6A4 targeting to the plasma membrane hence regulating their activity. In the nucleus, functions as a nuclear receptor coactivator regulating glucocorticoid, androgen, mineralocorticoid and progesterone receptor transcriptional activity. May play a role in the processes of cell growth, proliferation, migration, differentiation and senescence. May have a zinc-dependent DNA-binding activity. This is Transforming growth factor beta-1-induced transcript 1 protein (Tgfb1i1) from Rattus norvegicus (Rat).